We begin with the raw amino-acid sequence, 926 residues long: DNA mismatch repair protein MutS (926 aa).

The segment at 1-67 (MAASPNPLQG…NPNQINDLDQ (67 aa)) is disordered. Polar residues-rich tracts occupy residues 18–44 (QSTTNGGKETNNSIGSSENLSNQQLKS) and 57–67 (KNPNQINDLDQ). An ATP-binding site is contributed by 726–733 (GPNASGKS).

It belongs to the DNA mismatch repair MutS family.

In terms of biological role, this protein is involved in the repair of mismatches in DNA. It is possible that it carries out the mismatch recognition step. This protein has a weak ATPase activity. The polypeptide is DNA mismatch repair protein MutS (Prochlorococcus marinus (strain NATL1A)).